We begin with the raw amino-acid sequence, 158 residues long: Xanthine-guanine phosphoribosyltransferase (158 aa).

5-phospho-alpha-D-ribose 1-diphosphate-binding positions include 38–39 and 90–98; these read RG and DDLVDTGGT. Aspartate 91 lines the Mg(2+) pocket. Residues aspartate 94 and isoleucine 137 each contribute to the guanine site. Xanthine is bound by residues aspartate 94 and isoleucine 137. GMP is bound by residues 94–98 and 136–137; these read DTGGT and WI.

It belongs to the purine/pyrimidine phosphoribosyltransferase family. XGPT subfamily. As to quaternary structure, homotetramer. Mg(2+) is required as a cofactor.

It localises to the cell inner membrane. It carries out the reaction GMP + diphosphate = guanine + 5-phospho-alpha-D-ribose 1-diphosphate. It catalyses the reaction XMP + diphosphate = xanthine + 5-phospho-alpha-D-ribose 1-diphosphate. The enzyme catalyses IMP + diphosphate = hypoxanthine + 5-phospho-alpha-D-ribose 1-diphosphate. Its pathway is purine metabolism; GMP biosynthesis via salvage pathway; GMP from guanine: step 1/1. It participates in purine metabolism; XMP biosynthesis via salvage pathway; XMP from xanthine: step 1/1. In terms of biological role, purine salvage pathway enzyme that catalyzes the transfer of the ribosyl-5-phosphate group from 5-phospho-alpha-D-ribose 1-diphosphate (PRPP) to the N9 position of the 6-oxopurines guanine and xanthine to form the corresponding ribonucleotides GMP (guanosine 5'-monophosphate) and XMP (xanthosine 5'-monophosphate), with the release of PPi. To a lesser extent, also acts on hypoxanthine. The chain is Xanthine-guanine phosphoribosyltransferase from Buchnera aphidicola subsp. Acyrthosiphon pisum (strain APS) (Acyrthosiphon pisum symbiotic bacterium).